The sequence spans 243 residues: 1-(5-phosphoribosyl)-5-[(5-phosphoribosylamino)methylideneamino] imidazole-4-carboxamide isomerase (243 aa).

Asp-8 functions as the Proton acceptor in the catalytic mechanism. The Proton donor role is filled by Asp-129.

It belongs to the HisA/HisF family.

The protein resides in the cytoplasm. The catalysed reaction is 1-(5-phospho-beta-D-ribosyl)-5-[(5-phospho-beta-D-ribosylamino)methylideneamino]imidazole-4-carboxamide = 5-[(5-phospho-1-deoxy-D-ribulos-1-ylimino)methylamino]-1-(5-phospho-beta-D-ribosyl)imidazole-4-carboxamide. Its pathway is amino-acid biosynthesis; L-histidine biosynthesis; L-histidine from 5-phospho-alpha-D-ribose 1-diphosphate: step 4/9. The sequence is that of 1-(5-phosphoribosyl)-5-[(5-phosphoribosylamino)methylideneamino] imidazole-4-carboxamide isomerase from Brucella abortus (strain 2308).